Consider the following 62-residue polypeptide: Defensin BmKDfsin3 (62 aa).

A signal peptide spans Met-1–Ala-24. Cystine bridges form between Cys-28-Cys-49, Cys-35-Cys-57, and Cys-39-Cys-59.

It belongs to the invertebrate defensin family. Type 2 subfamily. In terms of tissue distribution, low expression in both venom and non-venom glands (hemolymph).

Its subcellular location is the secreted. Its function is as follows. Antibacterial peptide active against Gram-positive bacteria (including S.aureus ATCC25923 (MIC=2.5 uM), M.luteus AB93113 (MIC=2.5 uM), and the antibiotic-resistant S.epidermidis PRSE P1389 (MIC=1.25 uM)), but not against Gram-negative bacteria (including E.coli and P.aeruginosa). Also blocks the currents of Kv1.1/KCNA1 (57% inhibition), Kv1.2/KCNA2 (27.5% inhibition), Kv1.3/KCNA3 (IC(50)=23.4 nM, 84.3% inhibition), KCa3.1/KCNN4/IK (15% inhibition), KCa2.3/KCNN3/SK3 (87.5% inhibition) and Kv11.1/KCNH2/ERG1 (30.4% inhibition) channels (tested at 1 uM). It inhibits potassium channel current by interacting with the pore region. In Olivierus martensii (Manchurian scorpion), this protein is Defensin BmKDfsin3.